The following is a 309-amino-acid chain: MSEINISAAAVKELREKTGAGMMDCKKALIETSGNFEEAIDFLRKKGLAAAVKKFGRIASEGLTAIKINGLTSVVIEVNSETDFVARNEQFQNLVKDIVNLAIIAQNIDALKISKMQSGKSVEEEIIENIATIGENLTLRRMDILEISNGAIGSYVHNEVVPHLGKISVLVGLESNAKDKAKLAALAKQIAVHVAGNNPQSIDTLSLDQALVERERKVFFEKSKEEGKPDHIIEKMVEGRIRKFFSEVVLLQQNFLFEPKLTVAEVIKNAEQELGAEIKITKFIRYALGEGIEHEEKNFADEVASITKC.

The interval 82 to 85 is involved in Mg(2+) ion dislocation from EF-Tu; the sequence is TDFV.

The protein belongs to the EF-Ts family.

The protein resides in the cytoplasm. Its function is as follows. Associates with the EF-Tu.GDP complex and induces the exchange of GDP to GTP. It remains bound to the aminoacyl-tRNA.EF-Tu.GTP complex up to the GTP hydrolysis stage on the ribosome. The protein is Elongation factor Ts of Rickettsia typhi (strain ATCC VR-144 / Wilmington).